Here is a 732-residue protein sequence, read N- to C-terminus: Probable zinc transporter cis4 (732 aa).

12 helical membrane-spanning segments follow: residues 52–72, 79–99, 111–131, 163–183, 189–209, 219–239, 240–260, 268–288, 350–370, 380–400, 415–435, and 453–473; these read ETLGWFSVICAFSITGSGLEV, FYLIFGIFAFVSFTTQYLGIY, VIIASLSMVFITLGAFVLGTL, YIAFPICLFVINHILILLGYF, VFYASVFYILLGVFIRVFYLV, LAFLFSSIVVACLIQFNVLPL, GTINLSVTRFTILCFMQIFCI, IQFYLGKFDISLIMALISAII, IFYFFLLNVSYMFVQVIYGLW, AIHMAFDCIAILVGLVATTLA, IEALSGFTNGIFLVLISFSIV, and LLLVSFLGLVVNLVGILAFNH. Residues 526–547 form a disordered region; sequence HVSQHEHTHENSQEHHHEHNHN. The next 2 helical transmembrane spans lie at 586-606 and 615-635; these read IFLHIIADTMGSVGVIVSTIL and FDPLASLIIAALIFVSVLPLI.

The protein belongs to the cation diffusion facilitator (CDF) transporter (TC 2.A.4) family. SLC30A subfamily. Interacts with zrg17.

It localises to the endoplasmic reticulum membrane. The protein resides in the golgi apparatus. Its subcellular location is the cis-Golgi network membrane. In terms of biological role, probable zinc transporter involved in Golgi membrane trafficking through the regulation of zinc homeostasis. In Schizosaccharomyces pombe (strain 972 / ATCC 24843) (Fission yeast), this protein is Probable zinc transporter cis4 (cis4).